Reading from the N-terminus, the 314-residue chain is Homoserine kinase (314 aa).

95 to 105 (PHSRGLGSSAS) is an ATP binding site.

The protein belongs to the GHMP kinase family. Homoserine kinase subfamily.

The protein resides in the cytoplasm. The catalysed reaction is L-homoserine + ATP = O-phospho-L-homoserine + ADP + H(+). The protein operates within amino-acid biosynthesis; L-threonine biosynthesis; L-threonine from L-aspartate: step 4/5. Catalyzes the ATP-dependent phosphorylation of L-homoserine to L-homoserine phosphate. This chain is Homoserine kinase, found in Rhodococcus opacus (strain B4).